Reading from the N-terminus, the 642-residue chain is Threonine--tRNA ligase (642 aa).

The TGS domain maps to 1-61 (MPVITLPDGS…SEDANLVIFT (61 aa)). Positions 243–534 (DHRKLAKKFD…LIEHYEGSFP (292 aa)) are catalytic. 3 residues coordinate Zn(2+): Cys334, His385, and His511.

The protein belongs to the class-II aminoacyl-tRNA synthetase family. As to quaternary structure, homodimer. It depends on Zn(2+) as a cofactor.

Its subcellular location is the cytoplasm. It catalyses the reaction tRNA(Thr) + L-threonine + ATP = L-threonyl-tRNA(Thr) + AMP + diphosphate + H(+). Catalyzes the attachment of threonine to tRNA(Thr) in a two-step reaction: L-threonine is first activated by ATP to form Thr-AMP and then transferred to the acceptor end of tRNA(Thr). Also edits incorrectly charged L-seryl-tRNA(Thr). The protein is Threonine--tRNA ligase of Cellvibrio japonicus (strain Ueda107) (Pseudomonas fluorescens subsp. cellulosa).